The chain runs to 355 residues: NADH-quinone oxidoreductase subunit H (355 aa).

Transmembrane regions (helical) follow at residues 25 to 45 (IVRI…LILW), 91 to 111 (WLYL…WAVI), 126 to 146 (LLYA…AGWA), 170 to 190 (MGFA…SEIV), 205 to 225 (FLSW…VSGI), 253 to 273 (MAFA…SALA), 290 to 310 (FIPG…VFIW), and 330 to 350 (VFLP…MSPL).

The protein belongs to the complex I subunit 1 family. In terms of assembly, NDH-1 is composed of 14 different subunits. Subunits NuoA, H, J, K, L, M, N constitute the membrane sector of the complex.

Its subcellular location is the cell inner membrane. It catalyses the reaction a quinone + NADH + 5 H(+)(in) = a quinol + NAD(+) + 4 H(+)(out). Its function is as follows. NDH-1 shuttles electrons from NADH, via FMN and iron-sulfur (Fe-S) centers, to quinones in the respiratory chain. The immediate electron acceptor for the enzyme in this species is believed to be ubiquinone. Couples the redox reaction to proton translocation (for every two electrons transferred, four hydrogen ions are translocated across the cytoplasmic membrane), and thus conserves the redox energy in a proton gradient. This subunit may bind ubiquinone. This Burkholderia ambifaria (strain MC40-6) protein is NADH-quinone oxidoreductase subunit H.